A 792-amino-acid polypeptide reads, in one-letter code: MKFSENWLRSHVPIQATRDELSATLTAIGLEVEEVTPLGESLGQVVVARIVEAVRHPEADRLQVCSVDAGQGELMQIVCGAPNARAGLVAPLALVGAKIGELTITAAKLRGVASNGMLCSAKELGLDSDASGLFELPDDAPVGQALAEYLGLPDASIEIKLTPNRADCFSVRGIAFDVAAACASEVVAFDAVAVAPVSTRSLAVELDAGKDAPRYCGRVIEGIDPAAKTPVWLAERLRRSGVRPVSLLVDITQYVMLELGQPMHAFDLETLHGPIGVRRSRAGEQLALLDGRQVTLDDSFLTITDAGRAVALAGLMGGLDTRVTETTRNVFLESAYFDPAAIMGRGRKLGLHTDAGHRFERGVDPALPPQAIEVATRLVLELAGGTPGPVVHAQLPEHLPQPVHIRLRRARIARVLGIQIDDADVVRMLRALGMHVEAVAEGWEVMAPSRRFDIAIEEDLIEELARIHGYDRVPTTLPGGASRIAMPSETQLDELSVRRQLVARELQETINYAFVDAALLERWQLTEGLVPLANPLSAELAIMRPRLLPGLVATLGRNAARQAGRVRLFELGKVFAAAADTGAAPGESQHVAAAVCGDALALQWGEPARKVDFHDLKGDLMALAAASGAQLEFQPSTQPFGHPGRSADIYREGVCIGWIGQVHPRLAKALDIDVDVIAFELQLMPLVQRTLPRAGELSRFPSVRRDLAFLVPDEVSWAAVSASVRTTVGPLLREVQLFDRYVGQGVEPGFKSLAMGLILQDNSRTLTDRDVDAVVADVVAVIEREHRARIRS.

Residues 39–147 form the tRNA-binding domain; sequence GESLGQVVVA…DDAPVGQALA (109 aa). In terms of domain architecture, B5 spans 400–475; it reads PQPVHIRLRR…RIHGYDRVPT (76 aa). Residues Asp453, Asp459, Glu462, and Glu463 each coordinate Mg(2+). The FDX-ACB domain occupies 698-791; sequence SRFPSVRRDL…IEREHRARIR (94 aa).

It belongs to the phenylalanyl-tRNA synthetase beta subunit family. Type 1 subfamily. Tetramer of two alpha and two beta subunits. Requires Mg(2+) as cofactor.

It localises to the cytoplasm. It catalyses the reaction tRNA(Phe) + L-phenylalanine + ATP = L-phenylalanyl-tRNA(Phe) + AMP + diphosphate + H(+). This is Phenylalanine--tRNA ligase beta subunit from Xanthomonas axonopodis pv. citri (strain 306).